Consider the following 1379-residue polypeptide: DNA-directed RNA polymerase subunit beta (1379 aa).

This sequence belongs to the RNA polymerase beta chain family. In terms of assembly, the RNAP catalytic core consists of 2 alpha, 1 beta, 1 beta' and 1 omega subunit. When a sigma factor is associated with the core the holoenzyme is formed, which can initiate transcription.

It carries out the reaction RNA(n) + a ribonucleoside 5'-triphosphate = RNA(n+1) + diphosphate. Its function is as follows. DNA-dependent RNA polymerase catalyzes the transcription of DNA into RNA using the four ribonucleoside triphosphates as substrates. This Allorhizobium ampelinum (strain ATCC BAA-846 / DSM 112012 / S4) (Agrobacterium vitis (strain S4)) protein is DNA-directed RNA polymerase subunit beta.